We begin with the raw amino-acid sequence, 501 residues long: UDP-N-acetylmuramoyl-L-alanyl-D-glutamate--2,6-diaminopimelate ligase (501 aa).

Residues L26, S28, and 43-45 (HQC) contribute to the UDP-N-acetyl-alpha-D-muramoyl-L-alanyl-D-glutamate site. Position 123–129 (123–129 (GTNGKTT)) interacts with ATP. Residues N164, 165-166 (TT), S192, Q198, and R200 each bind UDP-N-acetyl-alpha-D-muramoyl-L-alanyl-D-glutamate. Position 232 is an N6-carboxylysine (K232). Meso-2,6-diaminopimelate-binding positions include R398, 422 to 425 (DNPR), G473, and E477. Residues 422-425 (DNPR) carry the Meso-diaminopimelate recognition motif motif.

The protein belongs to the MurCDEF family. MurE subfamily. The cofactor is Mg(2+). Carboxylation is probably crucial for Mg(2+) binding and, consequently, for the gamma-phosphate positioning of ATP.

Its subcellular location is the cytoplasm. It catalyses the reaction UDP-N-acetyl-alpha-D-muramoyl-L-alanyl-D-glutamate + meso-2,6-diaminopimelate + ATP = UDP-N-acetyl-alpha-D-muramoyl-L-alanyl-gamma-D-glutamyl-meso-2,6-diaminopimelate + ADP + phosphate + H(+). Its pathway is cell wall biogenesis; peptidoglycan biosynthesis. In terms of biological role, catalyzes the addition of meso-diaminopimelic acid to the nucleotide precursor UDP-N-acetylmuramoyl-L-alanyl-D-glutamate (UMAG) in the biosynthesis of bacterial cell-wall peptidoglycan. The sequence is that of UDP-N-acetylmuramoyl-L-alanyl-D-glutamate--2,6-diaminopimelate ligase from Haemophilus ducreyi (strain 35000HP / ATCC 700724).